A 119-amino-acid polypeptide reads, in one-letter code: Large ribosomal subunit protein uL22 (119 aa).

The protein belongs to the universal ribosomal protein uL22 family. In terms of assembly, part of the 50S ribosomal subunit.

Functionally, this protein binds specifically to 23S rRNA; its binding is stimulated by other ribosomal proteins, e.g. L4, L17, and L20. It is important during the early stages of 50S assembly. It makes multiple contacts with different domains of the 23S rRNA in the assembled 50S subunit and ribosome. Its function is as follows. The globular domain of the protein is located near the polypeptide exit tunnel on the outside of the subunit, while an extended beta-hairpin is found that lines the wall of the exit tunnel in the center of the 70S ribosome. This chain is Large ribosomal subunit protein uL22, found in Rickettsia felis (strain ATCC VR-1525 / URRWXCal2) (Rickettsia azadi).